We begin with the raw amino-acid sequence, 334 residues long: Anthranilate phosphoribosyltransferase (334 aa).

5-phospho-alpha-D-ribose 1-diphosphate is bound by residues glycine 79, 82–83 (GD), serine 87, 89–92 (NIST), 107–115 (KHGNRSISS), and serine 119. Glycine 79 contributes to the anthranilate binding site. Serine 91 contacts Mg(2+). Position 110 (asparagine 110) interacts with anthranilate. Anthranilate is bound at residue arginine 165. Positions 224 and 225 each coordinate Mg(2+).

This sequence belongs to the anthranilate phosphoribosyltransferase family. As to quaternary structure, homodimer. Mg(2+) is required as a cofactor.

The catalysed reaction is N-(5-phospho-beta-D-ribosyl)anthranilate + diphosphate = 5-phospho-alpha-D-ribose 1-diphosphate + anthranilate. Its pathway is amino-acid biosynthesis; L-tryptophan biosynthesis; L-tryptophan from chorismate: step 2/5. In terms of biological role, catalyzes the transfer of the phosphoribosyl group of 5-phosphorylribose-1-pyrophosphate (PRPP) to anthranilate to yield N-(5'-phosphoribosyl)-anthranilate (PRA). This chain is Anthranilate phosphoribosyltransferase, found in Streptococcus pneumoniae (strain ATCC 700669 / Spain 23F-1).